Here is a 645-residue protein sequence, read N- to C-terminus: Bifurcating [FeFe] hydrogenase alpha subunit (645 aa).

Residues 1–76 (MKIYVDGREV…GMKVKTNTPE (76 aa)) form the 2Fe-2S ferredoxin-type domain. The [2Fe-2S] cluster site is built by Cys34, Cys45, Cys48, and Cys60. Residues 76–115 (EIYEMRRNILELILATHNRDCTTCDRNGSCKLQKYAEDFG) enclose the 4Fe-4S His(Cys)3-ligated-type domain. Residues His92, Cys96, Cys99, Cys105, Cys143, Cys146, Cys149, Cys153, Cys186, Cys189, Cys192, Cys196, Cys295, Cys350, Cys482, and Cys486 each coordinate [4Fe-4S] cluster. 4Fe-4S ferredoxin-type domains follow at residues 133–164 (SAPV…VIEF) and 178–206 (DTPL…IRND). Cys486 lines the Fe(2+) pocket. Residues Cys575, Cys580, Cys612, and Cys616 each coordinate [2Fe-2S] cluster.

As to quaternary structure, heterotrimer composed of HydA (alpha subunit), HydB (beta subunit) and HydC (gamma subunit). Near neutral and acidic pH conditions favor oligomerization of the heterotrimeric holoenzyme. [2Fe-2S] cluster serves as cofactor. The cofactor is [4Fe-4S] cluster. Fe(2+) is required as a cofactor.

It is found in the cytoplasm. It carries out the reaction 2 H2 + 2 oxidized [2Fe-2S]-[ferredoxin] + NAD(+) = 2 reduced [2Fe-2S]-[ferredoxin] + NADH + 3 H(+). Functionally, catalyzes the oxidation of the physiological electron carriers NADH and reduced ferredoxin, coupled to the production of H(2). Acts as a bifurcating [FeFe] hydrogenase, which uses the exergonic oxidation of reduced ferredoxin to drive the unfavorable oxidation of NADH to produce H(2). The alpha subunit contains the catalytic H-cluster. This chain is Bifurcating [FeFe] hydrogenase alpha subunit, found in Thermotoga maritima (strain ATCC 43589 / DSM 3109 / JCM 10099 / NBRC 100826 / MSB8).